Consider the following 224-residue polypeptide: 7-cyano-7-deazaguanine synthase (224 aa).

12–22 contributes to the ATP binding site; the sequence is MSGGMDSTLGA. Zn(2+) contacts are provided by Cys191, Cys199, Cys202, and Cys205.

It belongs to the QueC family. Zn(2+) is required as a cofactor.

The enzyme catalyses 7-carboxy-7-deazaguanine + NH4(+) + ATP = 7-cyano-7-deazaguanine + ADP + phosphate + H2O + H(+). It functions in the pathway purine metabolism; 7-cyano-7-deazaguanine biosynthesis. Its function is as follows. Catalyzes the ATP-dependent conversion of 7-carboxy-7-deazaguanine (CDG) to 7-cyano-7-deazaguanine (preQ(0)). The chain is 7-cyano-7-deazaguanine synthase from Sulfurimonas denitrificans (strain ATCC 33889 / DSM 1251) (Thiomicrospira denitrificans (strain ATCC 33889 / DSM 1251)).